Consider the following 114-residue polypeptide: Replication initiation control protein YabA (114 aa).

4 residues coordinate Zn(2+): His79, Cys81, Cys95, and Cys98.

This sequence belongs to the YabA family. In terms of assembly, homotetramer. Interacts with both DnaA and DnaN, acting as a bridge between these two proteins. It depends on Zn(2+) as a cofactor.

It localises to the cytoplasm. It is found in the nucleoid. Involved in control of chromosome replication initiation. Inhibits the cooperative binding of DnaA to the oriC region, thus negatively regulating initiation of chromosome replication. Inhibits the ability of DnaA-ATP to form a helix on DNA; does not disassemble preformed DnaA-DNA helices. Decreases the residence time of DnaA on the chromosome at its binding sites (oriC, replication forks and promoter-binding sites). Tethers DnaA to the replication machinery via the DNA polymerase beta sliding clamp subunit (dnaN). Associates with oriC and other DnaA targets on the chromosome in a DnaA-dependent manner. This Lactobacillus gasseri (strain ATCC 33323 / DSM 20243 / BCRC 14619 / CIP 102991 / JCM 1131 / KCTC 3163 / NCIMB 11718 / NCTC 13722 / AM63) protein is Replication initiation control protein YabA.